Reading from the N-terminus, the 289-residue chain is ATP synthase gamma chain (289 aa).

The protein belongs to the ATPase gamma chain family. F-type ATPases have 2 components, CF(1) - the catalytic core - and CF(0) - the membrane proton channel. CF(1) has five subunits: alpha(3), beta(3), gamma(1), delta(1), epsilon(1). CF(0) has three main subunits: a, b and c.

The protein localises to the cell membrane. Functionally, produces ATP from ADP in the presence of a proton gradient across the membrane. The gamma chain is believed to be important in regulating ATPase activity and the flow of protons through the CF(0) complex. In Lactococcus lactis subsp. cremoris (strain SK11), this protein is ATP synthase gamma chain.